Consider the following 376-residue polypeptide: Mitogen-activated protein kinase 2 (376 aa).

One can recognise a Protein kinase domain in the interval 32-319 (YVPIKPIGRG…VTEALQHPYM (288 aa)). ATP contacts are provided by residues 38–46 (IGRGAYGVV) and lysine 61. The active-site Proton acceptor is the aspartate 158. Position 191 is a phosphothreonine (threonine 191). The short motif at 191 to 193 (TEY) is the TXY element. The residue at position 193 (tyrosine 193) is a Phosphotyrosine. At threonine 196 the chain carries Phosphothreonine.

Belongs to the protein kinase superfamily. CMGC Ser/Thr protein kinase family. MAP kinase subfamily. As to quaternary structure, interacts with MKK3. In terms of processing, dually phosphorylated on Thr-191 and Tyr-193, which activates the enzyme. Phosphorylated on Ser residue. Highest levels in the stem. Present in the leaf, root and flower, but not in seeds.

The catalysed reaction is L-seryl-[protein] + ATP = O-phospho-L-seryl-[protein] + ADP + H(+). The enzyme catalyses L-threonyl-[protein] + ATP = O-phospho-L-threonyl-[protein] + ADP + H(+). With respect to regulation, activated by threonine and tyrosine phosphorylation. The protein is Mitogen-activated protein kinase 2 (MPK2) of Arabidopsis thaliana (Mouse-ear cress).